An 842-amino-acid polypeptide reads, in one-letter code: Serine/threonine-protein phosphatase 4 regulatory subunit 3 (842 aa).

As to quaternary structure, regulatory subunit 3 (R3) of the histone H2A phosphatase complex (HTP-C) consisting of PPH3, PSY2 and PSY4.

The protein localises to the nucleus. Core regulatory subunit of the histone H2A phosphatase complex, which dephosphorylates H2AS128ph (gamma-H2A) that has been displaced from sites of DNA lesions in the double-stranded DNA break repair process. Dephosphorylation is necessary for efficient recovery from the DNA damage checkpoint. The chain is Serine/threonine-protein phosphatase 4 regulatory subunit 3 (PSY2) from Candida glabrata (strain ATCC 2001 / BCRC 20586 / JCM 3761 / NBRC 0622 / NRRL Y-65 / CBS 138) (Yeast).